Reading from the N-terminus, the 203-residue chain is Putative phosphoserine phosphatase 2 (203 aa).

H9 (tele-phosphohistidine intermediate) is an active-site residue. H149 is an active-site residue.

Belongs to the histidine phosphatase superfamily. Metal-independent phosphoserine phosphatase family. In terms of assembly, heterodimer with PspA. The PspB subunit appears to have no or considerably lower PSP activity compared with that of PspA.

The enzyme catalyses O-phospho-L-serine + H2O = L-serine + phosphate. It catalyses the reaction O-phospho-D-serine + H2O = D-serine + phosphate. It functions in the pathway amino-acid biosynthesis; L-serine biosynthesis; L-serine from 3-phospho-D-glycerate: step 3/3. Activity is not inhibited by EDTA in vitro, nor enhanced by the addition of Mg(2+). Part of a complex that catalyzes the dephosphorylation of L-phosphoserine to serine and inorganic phosphate. Is poorly or not active toward D-phosphoserine, DL-phosphothreonine, 3-phosphoglycerate, para-nitrophenylphosphate, and fructose-6-phosphate. Does not display phosphoglycerate mutase activity. The sequence is that of Putative phosphoserine phosphatase 2 (pspB) from Hydrogenobacter thermophilus (strain DSM 6534 / IAM 12695 / TK-6).